Here is a 473-residue protein sequence, read N- to C-terminus: tRNA-2-methylthio-N(6)-dimethylallyladenosine synthase (473 aa).

The tract at residues 1–21 (MTQDSALLQAPEAIPSESLRD) is disordered. In terms of domain architecture, MTTase N-terminal spans 26–146 (RKVFIKTYGC…LPEALRRAKQ (121 aa)). [4Fe-4S] cluster-binding residues include cysteine 35, cysteine 71, cysteine 109, cysteine 187, cysteine 191, and cysteine 194. The region spanning 173–405 (RARGVTAFLT…QMLLLKQQQE (233 aa)) is the Radical SAM core domain. Residues 408 to 470 (ESCVGKEIDL…TNSLFAEHAE (63 aa)) enclose the TRAM domain.

It belongs to the methylthiotransferase family. MiaB subfamily. Monomer. Requires [4Fe-4S] cluster as cofactor.

The protein localises to the cytoplasm. The enzyme catalyses N(6)-dimethylallyladenosine(37) in tRNA + (sulfur carrier)-SH + AH2 + 2 S-adenosyl-L-methionine = 2-methylsulfanyl-N(6)-dimethylallyladenosine(37) in tRNA + (sulfur carrier)-H + 5'-deoxyadenosine + L-methionine + A + S-adenosyl-L-homocysteine + 2 H(+). Catalyzes the methylthiolation of N6-(dimethylallyl)adenosine (i(6)A), leading to the formation of 2-methylthio-N6-(dimethylallyl)adenosine (ms(2)i(6)A) at position 37 in tRNAs that read codons beginning with uridine. This Rhizobium johnstonii (strain DSM 114642 / LMG 32736 / 3841) (Rhizobium leguminosarum bv. viciae) protein is tRNA-2-methylthio-N(6)-dimethylallyladenosine synthase.